The primary structure comprises 224 residues: Heme response regulator HssR (224 aa).

One can recognise a Response regulatory domain in the interval 3–116; it reads QCLVVDDDSR…ELIFRIRAVL (114 aa). Asp-52 is subject to 4-aspartylphosphate. Residues 124-222 constitute a DNA-binding region (ompR/PhoB-type); sequence NSEMTIGNLT…VRGQGYKVEN (99 aa).

Post-translationally, phosphorylated by HssS.

It is found in the cytoplasm. In terms of biological role, member of the two-component regulatory system HssS/HssR involved in intracellular heme homeostasis and tempering of staphylococcal virulence. Phosphorylated HssR binds to a direct repeat sequence within hrtAB promoter and activates the expression of hrtAB, an efflux pump, in response to extracellular heme, hemin, hemoglobin or blood. The polypeptide is Heme response regulator HssR (hssR) (Staphylococcus aureus (strain bovine RF122 / ET3-1)).